Consider the following 385-residue polypeptide: UPF0284 protein PMM0439 (385 aa).

Belongs to the UPF0284 family.

This Prochlorococcus marinus subsp. pastoris (strain CCMP1986 / NIES-2087 / MED4) protein is UPF0284 protein PMM0439.